We begin with the raw amino-acid sequence, 863 residues long: Eukaryotic translation initiation factor 3 subunit C (863 aa).

Residues 1-92 (MSRFFRGGDD…VKSAKDKRFD (92 aa)) form a disordered region. Over residues 16–53 (SSDEEELYSTSEEEEEEDQDQEESSEEEDEEESSDEDE) the composition is skewed to acidic residues. The segment covering 79-92 (GATKVKSAKDKRFD) has biased composition (basic and acidic residues). The 175-residue stretch at 604–778 (FHMHINLELL…KTVIFRKGVE (175 aa)) folds into the PCI domain. A disordered region spans residues 808–863 (TQGSANAFSRKDGRQGGQRGGGQRSGRGGARAGGNAQRQAGGTQFTGGALGAAVRG). Residues 822–839 (QGGQRGGGQRSGRGGARA) show a composition bias toward gly residues. Residues 840–850 (GGNAQRQAGGT) show a composition bias toward low complexity.

It belongs to the eIF-3 subunit C family. Component of the eukaryotic translation initiation factor 3 (eIF-3) complex.

The protein localises to the cytoplasm. Functionally, component of the eukaryotic translation initiation factor 3 (eIF-3) complex, which is involved in protein synthesis of a specialized repertoire of mRNAs and, together with other initiation factors, stimulates binding of mRNA and methionyl-tRNAi to the 40S ribosome. The eIF-3 complex specifically targets and initiates translation of a subset of mRNAs involved in cell proliferation. This chain is Eukaryotic translation initiation factor 3 subunit C, found in Chaetomium globosum (strain ATCC 6205 / CBS 148.51 / DSM 1962 / NBRC 6347 / NRRL 1970) (Soil fungus).